The primary structure comprises 497 residues: Transcription termination/antitermination protein NusA (497 aa).

The region spanning 135 to 200 is the S1 motif domain; the sequence is GKILTGIVKK…RGAQLFVTRS (66 aa). A KH domain is found at 302 to 372; it reads RHTIDIAVDS…LKIDQKISNI (71 aa). Repeat copies occupy residues 364-414 and 439-489. The interval 364–489 is 2 X 51 AA approximate repeats; that stretch reads KIDQKISNIL…MLIMAARNIC (126 aa).

Belongs to the NusA family. As to quaternary structure, monomer. Binds directly to the core enzyme of the DNA-dependent RNA polymerase and to nascent RNA.

The protein resides in the cytoplasm. Functionally, participates in both transcription termination and antitermination. This is Transcription termination/antitermination protein NusA from Buchnera aphidicola subsp. Baizongia pistaciae (strain Bp).